The primary structure comprises 477 residues: Myc-associated zinc finger protein (477 aa).

Disordered regions lie at residues 59-78 and 121-144; these read AQSP…APAA and TVDT…SAPA. Over residues 130–140 the composition is skewed to pro residues; sequence PPAPPPPPPAV. 4 C2H2-type zinc fingers span residues 190–212, 279–301, 307–329, and 337–360; these read YICA…EAIH, HACE…KLSH, YQCP…VRSH, and YNCS…RQVH. Serine 361 carries the phosphoserine modification. The segment at 366–388 adopts a C2H2-type 5 zinc-finger fold; that stretch reads FKCEKCEAAFATKDRLRAHTVRH. The C2H2-type 6; atypical zinc finger occupies 392 to 413; the sequence is VPCHVCGKMLSSAYISDHMKVH.

As to quaternary structure, interacts with BPTF. In terms of tissue distribution, expressed in Purkinje cells in the brain (at protein level).

It is found in the nucleus. Functionally, transcriptional regulator. Acts as a transcriptional activator that binds to purine-rich GAGA sites found in the promoter of many genes including insulin I and II and islet amyloid polypeptide. The sequence is that of Myc-associated zinc finger protein (Maz) from Mus musculus (Mouse).